The chain runs to 137 residues: Acidic phospholipase A2 PL-I (137 aa).

Positions 1-17 (AVCVSLLGASSIRPLPL) are cleaved as a signal peptide. 7 disulfide bridges follow: C28–C89, C44–C136, C46–C62, C61–C117, C68–C110, C78–C103, and C96–C108. Ca(2+)-binding residues include Y45, G47, and G49. Residue H65 is part of the active site. D66 lines the Ca(2+) pocket. Residue D111 is part of the active site.

Requires Ca(2+) as cofactor. Expressed by the venom gland.

It localises to the secreted. The catalysed reaction is a 1,2-diacyl-sn-glycero-3-phosphocholine + H2O = a 1-acyl-sn-glycero-3-phosphocholine + a fatty acid + H(+). Snake venom phospholipase A2 (PLA2) that may act in the hemostasis system of the prey. Exhibits hydrolytic activities, and prefers the anionic micelles (dPPC with deoxycholate) (793 umol/mg/min) to the zwitterionic micelles (dPPC with Triton X-100) (591 umol/mg/min). PLA2 catalyzes the calcium-dependent hydrolysis of the 2-acyl groups in 3-sn-phosphoglycerides. This Walterinnesia aegyptia (Desert black snake) protein is Acidic phospholipase A2 PL-I.